A 40-amino-acid polypeptide reads, in one-letter code: uncharacterized protein (40 aa).

A signal peptide spans 1-17 (MAVAALAMYGGTCGACA).

This is an uncharacterized protein from Archaeoglobus fulgidus (strain ATCC 49558 / DSM 4304 / JCM 9628 / NBRC 100126 / VC-16).